The primary structure comprises 148 residues: UPF0260 protein YcgN (148 aa).

This sequence belongs to the UPF0260 family.

The sequence is that of UPF0260 protein YcgN from Salmonella paratyphi A (strain AKU_12601).